The sequence spans 355 residues: MNGTEGINFYVPLSNKTGLVRSPFEYPQYYLAEPWKYKVVCCYIFFLIFTGLPINILTLLVTFKHKKLRQPLNYILVNLAVADLFMACFGFTVTFYTAWNGYFIFGPIGCAIEGFFATLGGQVALWSLVVLAIERYIVVCKPMGNFRFSATHALMGISFTWFMSFSCAAPPLLGWSRYIPEGMQCSCGPDYYTLNPDYHNESYVLYMFGVHFVIPVVVIFFSYGRLICKVREAAAQQQESASTQKAEREVTRMVILMVLGFLLAWTPYAMVAFWIFTNKGVDFSATLMSVPAFFSKSSSLYNPIIYVLMNKQFRNCMITTICCGKNPFGDEDVSSSVSQSKTEVSSVSSSQVSPA.

The Extracellular segment spans residues 1–36; sequence MNGTEGINFYVPLSNKTGLVRSPFEYPQYYLAEPWK. N-linked (GlcNAc...) asparagine glycans are attached at residues Asn2 and Asn15. A helical transmembrane segment spans residues 37 to 61; that stretch reads YKVVCCYIFFLIFTGLPINILTLLV. At 62–73 the chain is on the cytoplasmic side; it reads TFKHKKLRQPLN. Residues 74-98 traverse the membrane as a helical segment; it reads YILVNLAVADLFMACFGFTVTFYTA. The Extracellular segment spans residues 99-113; sequence WNGYFIFGPIGCAIE. An intrachain disulfide couples Cys110 to Cys187. Residues 114–133 traverse the membrane as a helical segment; that stretch reads GFFATLGGQVALWSLVVLAI. The Cytoplasmic portion of the chain corresponds to 134 to 152; that stretch reads ERYIVVCKPMGNFRFSATH. Residues 153–176 form a helical membrane-spanning segment; sequence ALMGISFTWFMSFSCAAPPLLGWS. Over 177 to 202 the chain is Extracellular; it reads RYIPEGMQCSCGPDYYTLNPDYHNES. Residue Asn200 is glycosylated (N-linked (GlcNAc...) asparagine). The helical transmembrane segment at 203–230 threads the bilayer; sequence YVLYMFGVHFVIPVVVIFFSYGRLICKV. Residues 231–252 lie on the Cytoplasmic side of the membrane; that stretch reads REAAAQQQESASTQKAEREVTR. The helical transmembrane segment at 253–276 threads the bilayer; that stretch reads MVILMVLGFLLAWTPYAMVAFWIF. Residues 277-284 lie on the Extracellular side of the membrane; the sequence is TNKGVDFS. The chain crosses the membrane as a helical span at residues 285–309; the sequence is ATLMSVPAFFSKSSSLYNPIIYVLM. Lys296 bears the N6-(retinylidene)lysine mark. The Cytoplasmic segment spans residues 310-355; sequence NKQFRNCMITTICCGKNPFGDEDVSSSVSQSKTEVSSVSSSQVSPA. Residues Cys322 and Cys323 are each lipidated (S-palmitoyl cysteine). Positions 332–355 are disordered; that stretch reads DVSSSVSQSKTEVSSVSSSQVSPA. The span at 334 to 355 shows a compositional bias: low complexity; sequence SSSVSQSKTEVSSVSSSQVSPA.

It belongs to the G-protein coupled receptor 1 family. Opsin subfamily. Post-translationally, phosphorylated on some or all of the serine and threonine residues present in the C-terminal region.

Its subcellular location is the membrane. Its function is as follows. Visual pigments are the light-absorbing molecules that mediate vision. They consist of an apoprotein, opsin, covalently linked to cis-retinal. This opsin uses a vitamin A2 chromophore. The polypeptide is Blue-sensitive opsin (Anolis carolinensis (Green anole)).